A 419-amino-acid chain; its full sequence is Phospho-N-acetylmuramoyl-pentapeptide-transferase (419 aa).

10 helical membrane-spanning segments follow: residues 22 to 42 (YVSF…TVIG), 72 to 92 (TPTM…LLLA), 99 to 119 (ILLM…DDYI), 135 to 155 (IIGQ…NPAV), 208 to 228 (VLFG…FISN), 238 to 258 (GLAT…AYVS), 278 to 298 (LTIF…YNAY), 303 to 323 (FMGD…ALII), 328 to 348 (LLPI…IQVF), and 396 to 416 (KITV…IATL).

This sequence belongs to the glycosyltransferase 4 family. MraY subfamily. The cofactor is Mg(2+).

It localises to the cell inner membrane. It carries out the reaction UDP-N-acetyl-alpha-D-muramoyl-L-alanyl-gamma-D-glutamyl-meso-2,6-diaminopimeloyl-D-alanyl-D-alanine + di-trans,octa-cis-undecaprenyl phosphate = di-trans,octa-cis-undecaprenyl diphospho-N-acetyl-alpha-D-muramoyl-L-alanyl-D-glutamyl-meso-2,6-diaminopimeloyl-D-alanyl-D-alanine + UMP. The protein operates within cell wall biogenesis; peptidoglycan biosynthesis. Functionally, catalyzes the initial step of the lipid cycle reactions in the biosynthesis of the cell wall peptidoglycan: transfers peptidoglycan precursor phospho-MurNAc-pentapeptide from UDP-MurNAc-pentapeptide onto the lipid carrier undecaprenyl phosphate, yielding undecaprenyl-pyrophosphoryl-MurNAc-pentapeptide, known as lipid I. The sequence is that of Phospho-N-acetylmuramoyl-pentapeptide-transferase from Porphyromonas gingivalis (strain ATCC BAA-308 / W83).